A 128-amino-acid chain; its full sequence is Glycine cleavage system H protein (128 aa).

In terms of domain architecture, Lipoyl-binding spans 25–107 (TVRVGITDFA…YEGGWLFEIT (83 aa)). Lysine 66 carries the N6-lipoyllysine modification.

Belongs to the GcvH family. In terms of assembly, the glycine cleavage system is composed of four proteins: P, T, L and H. It depends on (R)-lipoate as a cofactor.

Its function is as follows. The glycine cleavage system catalyzes the degradation of glycine. The H protein shuttles the methylamine group of glycine from the P protein to the T protein. The sequence is that of Glycine cleavage system H protein from Micrococcus luteus (strain ATCC 4698 / DSM 20030 / JCM 1464 / CCM 169 / CCUG 5858 / IAM 1056 / NBRC 3333 / NCIMB 9278 / NCTC 2665 / VKM Ac-2230) (Micrococcus lysodeikticus).